The chain runs to 237 residues: Orotidine 5'-phosphate decarboxylase (237 aa).

Residues aspartate 17, lysine 39, 66 to 75 (DLKLHDIGNT), threonine 121, arginine 182, glutamine 191, glycine 211, and arginine 212 contribute to the substrate site. The Proton donor role is filled by lysine 68.

It belongs to the OMP decarboxylase family. Type 1 subfamily. As to quaternary structure, homodimer.

It catalyses the reaction orotidine 5'-phosphate + H(+) = UMP + CO2. The protein operates within pyrimidine metabolism; UMP biosynthesis via de novo pathway; UMP from orotate: step 2/2. Its function is as follows. Catalyzes the decarboxylation of orotidine 5'-monophosphate (OMP) to uridine 5'-monophosphate (UMP). This is Orotidine 5'-phosphate decarboxylase from Rhodopseudomonas palustris (strain ATCC BAA-98 / CGA009).